Here is a 182-residue protein sequence, read N- to C-terminus: Protein SrpB (182 aa).

The next 4 helical transmembrane spans lie at tryptophan 11–asparagine 31, threonine 43–glycine 63, leucine 73–leucine 93, and isoleucine 116–isoleucine 136.

The protein belongs to the MgtC/SapB family.

Its subcellular location is the cell membrane. This is Protein SrpB (srpB) from Synechococcus elongatus (strain ATCC 33912 / PCC 7942 / FACHB-805) (Anacystis nidulans R2).